Reading from the N-terminus, the 251-residue chain is Osmotin-like protein (251 aa).

The signal sequence occupies residues 1–21 (MSHLTTFLVFFLLAFVTYTYA). Intrachain disulfides connect cysteine 31–cysteine 226, cysteine 73–cysteine 83, cysteine 88–cysteine 94, cysteine 142–cysteine 214, cysteine 147–cysteine 197, cysteine 155–cysteine 165, cysteine 169–cysteine 178, and cysteine 179–cysteine 184. An N-linked (GlcNAc...) asparagine glycan is attached at asparagine 233.

It belongs to the thaumatin family.

The protein is Osmotin-like protein (OLPA) of Nicotiana tabacum (Common tobacco).